Here is a 219-residue protein sequence, read N- to C-terminus: Cytochrome c biogenesis ATP-binding export protein CcmA (219 aa).

Positions 10–218 (ISAVNLTCIR…TLDYSYDSAV (209 aa)) constitute an ABC transporter domain. 42-49 (GPNGSGKT) contributes to the ATP binding site.

The protein belongs to the ABC transporter superfamily. CcmA exporter (TC 3.A.1.107) family. In terms of assembly, the complex is composed of two ATP-binding proteins (CcmA) and two transmembrane proteins (CcmB).

Its subcellular location is the cell inner membrane. The catalysed reaction is heme b(in) + ATP + H2O = heme b(out) + ADP + phosphate + H(+). Its function is as follows. Part of the ABC transporter complex CcmAB involved in the biogenesis of c-type cytochromes; once thought to export heme, this seems not to be the case, but its exact role is uncertain. Responsible for energy coupling to the transport system. This Colwellia psychrerythraea (strain 34H / ATCC BAA-681) (Vibrio psychroerythus) protein is Cytochrome c biogenesis ATP-binding export protein CcmA.